The primary structure comprises 220 residues: Metalloproteinase inhibitor 2 (220 aa).

Residues 1-26 (MGAAARSLRLALGLLLLATLLRPADA) form the signal peptide. Cys27 lines the Zn(2+) pocket. Involved in metalloproteinase-binding regions lie at residues 27–30 (CSCS) and 95–96 (SA). 6 cysteine pairs are disulfide-bonded: Cys27-Cys98, Cys29-Cys127, Cys39-Cys152, Cys154-Cys201, Cys159-Cys164, and Cys172-Cys193. In terms of domain architecture, NTR spans 27 to 152 (CSCSPVHPQQ…SLNHRYQMGC (126 aa)).

Belongs to the protease inhibitor I35 (TIMP) family. In terms of assembly, interacts (via the C-terminal) with MMP2 (via the C-terminal PEX domain); the interaction inhibits the MMP2 activity. Post-translationally, the activity of TIMP2 is dependent on the presence of disulfide bonds.

Its subcellular location is the secreted. Functionally, complexes with metalloproteinases (such as collagenases) and irreversibly inactivates them by binding to their catalytic zinc cofactor. The protein is Metalloproteinase inhibitor 2 (Timp2) of Rattus norvegicus (Rat).